Consider the following 376-residue polypeptide: Glutamate 5-kinase (376 aa).

K16 is a binding site for ATP. The substrate site is built by S56, D143, and N155. An ATP-binding site is contributed by 175–176 (TD). One can recognise a PUA domain in the interval 283–361 (RGALSLDEGA…RDIETTLGYV (79 aa)).

Belongs to the glutamate 5-kinase family.

Its subcellular location is the cytoplasm. It catalyses the reaction L-glutamate + ATP = L-glutamyl 5-phosphate + ADP. It participates in amino-acid biosynthesis; L-proline biosynthesis; L-glutamate 5-semialdehyde from L-glutamate: step 1/2. Catalyzes the transfer of a phosphate group to glutamate to form L-glutamate 5-phosphate. The polypeptide is Glutamate 5-kinase (Halorhodospira halophila (strain DSM 244 / SL1) (Ectothiorhodospira halophila (strain DSM 244 / SL1))).